A 708-amino-acid chain; its full sequence is Fatty acid oxidation complex subunit alpha (708 aa).

Residues 1–190 (MDMEKTFNLT…KMGLVDDAVP (190 aa)) form an enoyl-CoA hydratase region. Positions 310 to 708 (QKVNKVMVLG…MAEEGTRFFS (399 aa)) are 3-hydroxyacyl-CoA dehydrogenase.

This sequence in the N-terminal section; belongs to the enoyl-CoA hydratase/isomerase family. It in the central section; belongs to the 3-hydroxyacyl-CoA dehydrogenase family. As to quaternary structure, heterotetramer of two alpha chains (FadJ) and two beta chains (FadI).

It is found in the cytoplasm. It carries out the reaction a (3S)-3-hydroxyacyl-CoA = a (2E)-enoyl-CoA + H2O. The catalysed reaction is a 4-saturated-(3S)-3-hydroxyacyl-CoA = a (3E)-enoyl-CoA + H2O. It catalyses the reaction a (3S)-3-hydroxyacyl-CoA + NAD(+) = a 3-oxoacyl-CoA + NADH + H(+). The enzyme catalyses (3S)-3-hydroxybutanoyl-CoA = (3R)-3-hydroxybutanoyl-CoA. It functions in the pathway lipid metabolism; fatty acid beta-oxidation. Its function is as follows. Catalyzes the formation of a hydroxyacyl-CoA by addition of water on enoyl-CoA. Also exhibits 3-hydroxyacyl-CoA epimerase and 3-hydroxyacyl-CoA dehydrogenase activities. The protein is Fatty acid oxidation complex subunit alpha of Shewanella halifaxensis (strain HAW-EB4).